The chain runs to 450 residues: Phosphoglucosamine mutase (450 aa).

Serine 101 acts as the Phosphoserine intermediate in catalysis. Mg(2+)-binding residues include serine 101, aspartate 240, aspartate 242, and aspartate 244. Serine 101 bears the Phosphoserine mark.

This sequence belongs to the phosphohexose mutase family. Requires Mg(2+) as cofactor. Activated by phosphorylation. Phosphorylated by StkP in vivo.

It catalyses the reaction alpha-D-glucosamine 1-phosphate = D-glucosamine 6-phosphate. Its function is as follows. Catalyzes the conversion of glucosamine-6-phosphate to glucosamine-1-phosphate. The protein is Phosphoglucosamine mutase of Streptococcus pneumoniae (strain ATCC BAA-255 / R6).